A 60-amino-acid polypeptide reads, in one-letter code: Large ribosomal subunit protein uL30 (60 aa).

This sequence belongs to the universal ribosomal protein uL30 family. Part of the 50S ribosomal subunit.

This is Large ribosomal subunit protein uL30 from Shewanella denitrificans (strain OS217 / ATCC BAA-1090 / DSM 15013).